The following is a 476-amino-acid chain: Cysteine--tRNA ligase (476 aa).

Cysteine 36 lines the Zn(2+) pocket. Positions 38–48 (PTVYDYAHIGN) match the 'HIGH' region motif. Positions 221, 246, and 250 each coordinate Zn(2+). Positions 278–282 (KMSKS) match the 'KMSKS' region motif. Residue lysine 281 participates in ATP binding.

Belongs to the class-I aminoacyl-tRNA synthetase family. As to quaternary structure, monomer. Zn(2+) serves as cofactor.

The protein resides in the cytoplasm. The enzyme catalyses tRNA(Cys) + L-cysteine + ATP = L-cysteinyl-tRNA(Cys) + AMP + diphosphate. This chain is Cysteine--tRNA ligase, found in Chlamydia felis (strain Fe/C-56) (Chlamydophila felis).